The following is a 121-amino-acid chain: Large ribosomal subunit protein uL18 (121 aa).

Belongs to the universal ribosomal protein uL18 family. Part of the 50S ribosomal subunit; part of the 5S rRNA/L5/L18/L25 subcomplex. Contacts the 5S and 23S rRNAs.

Its function is as follows. This is one of the proteins that bind and probably mediate the attachment of the 5S RNA into the large ribosomal subunit, where it forms part of the central protuberance. The chain is Large ribosomal subunit protein uL18 from Verminephrobacter eiseniae (strain EF01-2).